The following is a 113-amino-acid chain: Small ribosomal subunit protein bS16 (113 aa).

The interval 84–113 is disordered; sequence PKPAYTEQPKKSAPKKRAQERAAAAAAAAA.

Belongs to the bacterial ribosomal protein bS16 family.

This chain is Small ribosomal subunit protein bS16, found in Gluconacetobacter diazotrophicus (strain ATCC 49037 / DSM 5601 / CCUG 37298 / CIP 103539 / LMG 7603 / PAl5).